Consider the following 251-residue polypeptide: tRNA (guanine-N(1)-)-methyltransferase (251 aa).

Residues G117 and 137–142 (IGDYVL) contribute to the S-adenosyl-L-methionine site.

This sequence belongs to the RNA methyltransferase TrmD family. In terms of assembly, homodimer.

It localises to the cytoplasm. The catalysed reaction is guanosine(37) in tRNA + S-adenosyl-L-methionine = N(1)-methylguanosine(37) in tRNA + S-adenosyl-L-homocysteine + H(+). In terms of biological role, specifically methylates guanosine-37 in various tRNAs. The polypeptide is tRNA (guanine-N(1)-)-methyltransferase (Haemophilus ducreyi (strain 35000HP / ATCC 700724)).